A 439-amino-acid polypeptide reads, in one-letter code: S-layer protein (439 aa).

The N-terminal stretch at 1 to 30 (MKKNLRIVSAAAAALLAVAPIAATAMPVNA) is a signal peptide.

In terms of processing, glycosylated.

The protein localises to the secreted. It localises to the cell wall. Its subcellular location is the S-layer. The S-layer is a paracrystalline mono-layered assembly of proteins which coat the surface of bacteria. This chain is S-layer protein (slpH), found in Lactobacillus helveticus (Lactobacillus suntoryeus).